Consider the following 362-residue polypeptide: MEMDLPVSAIGFEGFEKRLEISFVEPGLFSDPNGKGLRSLSKAQLDEILGPAECTIVDNLSNDYVDSYVLSESSLFVYSYKIIIKTCGTTKLLLAIPPILRLAETLSLKVQDVRYTRGSFIFPGAQSFPHRHFSEEVAVLDGYFGKLAAGSKAVIMGNPDKTQKWHVYSASAGPVQSNDPVYTLEMCMTGLDREKASVFYKTEGSSAAHMTVRSGIRKILPNSEICDFEFEPCGYSMNSIEGAAVSTIHITPEDGFSYASFESVGYDLKTMELGPLVERVLACFEPAEFSIALHADVATKLLERVCCVDVKGYSLAEWSPEEFGKGGSIVYQKFTKTPYCASPKSVLKGCWKEEEEEKEEKE.

Residues glutamate 13 and glutamate 16 contribute to the active site. Serine 73 serves as the catalytic Schiff-base intermediate with substrate; via pyruvic acid. Position 73 is a pyruvic acid (Ser); by autocatalysis (serine 73). Catalysis depends on cysteine 87, which acts as the Proton donor; for catalytic activity. Catalysis depends on proton acceptor; for processing activity residues serine 236 and histidine 249.

This sequence belongs to the eukaryotic AdoMetDC family. Pyruvate is required as a cofactor. In terms of processing, is synthesized initially as an inactive proenzyme. Formation of the active enzyme involves a self-maturation process in which the active site pyruvoyl group is generated from an internal serine residue via an autocatalytic post-translational modification. Two non-identical subunits are generated from the proenzyme in this reaction, and the pyruvate is formed at the N-terminus of the alpha chain, which is derived from the carboxyl end of the proenzyme. The post-translation cleavage follows an unusual pathway, termed non-hydrolytic serinolysis, in which the side chain hydroxyl group of the serine supplies its oxygen atom to form the C-terminus of the beta chain, while the remainder of the serine residue undergoes an oxidative deamination to produce ammonia and the pyruvoyl group blocking the N-terminus of the alpha chain.

It catalyses the reaction S-adenosyl-L-methionine + H(+) = S-adenosyl 3-(methylsulfanyl)propylamine + CO2. It participates in amine and polyamine biosynthesis; S-adenosylmethioninamine biosynthesis; S-adenosylmethioninamine from S-adenosyl-L-methionine: step 1/1. This chain is S-adenosylmethionine decarboxylase proenzyme (SAMDC), found in Datura stramonium (Jimsonweed).